A 250-amino-acid chain; its full sequence is Menaquinol:cytochrome c reductase cytochrome c subunit (250 aa).

3 helical membrane-spanning segments follow: residues 46–62 (WLVG…LTVA), 104–124 (VIGA…APFL), and 137–157 (VATG…WESV). Positions 178–250 (DTNAEGYKIA…LQKMANSSPA (73 aa)) constitute a Cytochrome c domain. The heme c site is built by Cys-192, Cys-195, and His-196. The segment at 229 to 250 (MPGGIFKGTDEELQKMANSSPA) is disordered.

Belongs to the cytochrome b family. As to quaternary structure, the main subunits of the menaquinol:cytochrome c complex are a Rieske-type iron-sulfur protein (QcrA), a cytochrome b (QcrB) and a cytochrome c (QcrC). Heme c is required as a cofactor.

It localises to the cell membrane. Functionally, component of the menaquinol:cytochrome c reductase complex. The sequence is that of Menaquinol:cytochrome c reductase cytochrome c subunit (qcrC) from Geobacillus thermodenitrificans.